Here is a 562-residue protein sequence, read N- to C-terminus: Ikaros family zinc finger protein (562 aa).

3 C2H2-type zinc fingers span residues 45 to 67 (IKCE…IRSH), 73 to 95 (FKCH…YKIH), and 101 to 123 (FQCP…MRIH). The C2H2-type 4; degenerate zinc-finger motif lies at 129–152 (YRCSYCARSYKSRQSMKEHEYQCP). 4 disordered regions span residues 178–210 (NPLA…PPYP), 293–342 (QNQQ…VKPT), 361–404 (QLED…KEDD), and 451–473 (DESK…STQD). Low complexity predominate over residues 307 to 326 (PSLSEATPSSHSSHSSAEDS). Positions 327–336 (GQVNKFSPTE) are enriched in polar residues. The segment covering 369 to 383 (DSRKRPHSFESEPTP) has biased composition (basic and acidic residues). Residues 456-471 (EISSVDSRSPLDQSST) are compositionally biased toward polar residues. C2H2-type zinc fingers lie at residues 494–516 (WECK…MGVH) and 522–546 (LVCN…HHQH).

This sequence belongs to the Ikaros C2H2-type zinc-finger protein family. In terms of tissue distribution, expression is strongest in the anterior Fol cells of the oikoplastic epithelium.

The protein resides in the nucleus. In Oikopleura dioica (Tunicate), this protein is Ikaros family zinc finger protein.